The chain runs to 87 residues: Phosphoribosyl-ATP pyrophosphatase (87 aa).

The protein belongs to the PRA-PH family.

It is found in the cytoplasm. The catalysed reaction is 1-(5-phospho-beta-D-ribosyl)-ATP + H2O = 1-(5-phospho-beta-D-ribosyl)-5'-AMP + diphosphate + H(+). It functions in the pathway amino-acid biosynthesis; L-histidine biosynthesis; L-histidine from 5-phospho-alpha-D-ribose 1-diphosphate: step 2/9. This is Phosphoribosyl-ATP pyrophosphatase from Kocuria rhizophila (strain ATCC 9341 / DSM 348 / NBRC 103217 / DC2201).